A 379-amino-acid chain; its full sequence is Lactosylceramide 1,3-N-acetyl-beta-D-glucosaminyltransferase A (379 aa).

The Cytoplasmic segment spans residues 1-12 (MFMNCRRVKKWH). The chain crosses the membrane as a helical; Signal-anchor for type II membrane protein span at residues 13–30 (FLQLLSMCCVMSVLMVCW). At 31-379 (EHVDHHVVSH…NTYSCMAAFT (349 aa)) the chain is on the lumenal side. N-linked (GlcNAc...) asparagine glycosylation is found at Asn57, Asn113, Asn168, and Asn277.

It belongs to the glycosyltransferase 31 family.

It localises to the golgi apparatus membrane. The enzyme catalyses a beta-D-Gal-(1-&gt;4)-beta-D-Glc-(1&lt;-&gt;1)-Cer(d18:1(4E)) + UDP-N-acetyl-alpha-D-glucosamine = a beta-D-GlcNAc-(1-&gt;3)-beta-D-Gal-(1-&gt;4)-beta-D-Glc-(1&lt;-&gt;1)-Cer(d18:1(4E)) + UDP + H(+). It carries out the reaction a neolactoside nLc4Cer(d18:1(4E)) + UDP-N-acetyl-alpha-D-glucosamine = a neolactoside IV(3)-beta-GlcNAc-nLc4Cer(d18:1(4E)) + UDP + H(+). It functions in the pathway protein modification; protein glycosylation. Functionally, beta-1,3-N-acetylglucosaminyltransferase that plays a key role in the synthesis of lacto- or neolacto-series carbohydrate chains on glycolipids. This is Lactosylceramide 1,3-N-acetyl-beta-D-glucosaminyltransferase A (b3gnt5a) from Danio rerio (Zebrafish).